The sequence spans 481 residues: UDP-glycosyltransferase 72E3 (481 aa).

The active-site Proton acceptor is the His18. His18 lines the an anthocyanidin pocket. Asp111 (charge relay) is an active-site residue. UDP-alpha-D-glucose-binding residues include Ala346, Gln348, His363, Trp366, Ser368, and Glu371. An an anthocyanidin-binding site is contributed by Ala386. 2 residues coordinate UDP-alpha-D-glucose: Glu387 and Gln388.

It belongs to the UDP-glycosyltransferase family. As to expression, expressed in seedlings and roots, and at lower levels in flowers and siliques.

It carries out the reaction (E)-4-coumarate + UDP-alpha-D-glucose = 4-O-(beta-D-glucosyl)-trans-4-coumarate + UDP + H(+). It catalyses the reaction (E)-sinapyl alcohol + UDP-alpha-D-glucose = 4-O-(beta-D-glucosyl)-trans-4-sinapoyl alcohol + UDP + H(+). The enzyme catalyses (E)-coniferol + UDP-alpha-D-glucose = 4-O-(beta-D-glucosyl)-(E)-coniferol + UDP + H(+). The catalysed reaction is (E)-sinapate + UDP-alpha-D-glucose = 4-O-(beta-D-glucosyl)-trans-sinapate + UDP + H(+). It carries out the reaction (E)-coniferaldehyde + UDP-alpha-D-glucose = 4-O-(beta-D-glucosyl)-4-(E)-coniferyl aldehyde + UDP + H(+). It catalyses the reaction (E)-sinapaldehyde + UDP-alpha-D-glucose = 4-O-(beta-D-glucosyl)-4-trans-sinapoyl aldehyde + UDP + H(+). In terms of biological role, involved in the O-glucosylation of monolignols (alcohol monomers of lignin). Glucosylates coniferyl alcohol to form coniferyl alcohol 4-O-glucoside. Glucosylates sinapyl alcohol to form sinapyl alcohol 4-O-glucoside. Possesses low activity with sinapate as substrate. The sequence is that of UDP-glycosyltransferase 72E3 from Arabidopsis thaliana (Mouse-ear cress).